The chain runs to 337 residues: Ribosomal RNA small subunit methyltransferase H (337 aa).

S-adenosyl-L-methionine is bound by residues 33-35 (AGH), D53, D101, and Q108.

Belongs to the methyltransferase superfamily. RsmH family.

The protein localises to the cytoplasm. The enzyme catalyses cytidine(1402) in 16S rRNA + S-adenosyl-L-methionine = N(4)-methylcytidine(1402) in 16S rRNA + S-adenosyl-L-homocysteine + H(+). In terms of biological role, specifically methylates the N4 position of cytidine in position 1402 (C1402) of 16S rRNA. This Herpetosiphon aurantiacus (strain ATCC 23779 / DSM 785 / 114-95) protein is Ribosomal RNA small subunit methyltransferase H.